A 231-amino-acid chain; its full sequence is NADH-ubiquinone oxidoreductase chain 4 (231 aa).

The next 6 helical transmembrane spans lie at 1-21 (PIAG…YGII), 34-54 (MFLP…LTCL), 63-85 (IAYS…TPWG), 89-111 (AMAL…NTTY), 128-148 (ILPM…AIPP), and 169-189 (TIIL…HMLL).

The protein belongs to the complex I subunit 4 family.

The protein resides in the mitochondrion membrane. The enzyme catalyses a ubiquinone + NADH + 5 H(+)(in) = a ubiquinol + NAD(+) + 4 H(+)(out). Core subunit of the mitochondrial membrane respiratory chain NADH dehydrogenase (Complex I) that is believed to belong to the minimal assembly required for catalysis. Complex I functions in the transfer of electrons from NADH to the respiratory chain. The immediate electron acceptor for the enzyme is believed to be ubiquinone. This is NADH-ubiquinone oxidoreductase chain 4 (MT-ND4) from Bothrops bilineatus (Green jararaca).